The primary structure comprises 495 residues: MSSALLDEAARIARQFDYPAAEVQRGVTEYIREIDEGLSKEHTTLSQIPTYVTAVPNGTEKGLYLAVDLGGTNFRVCSIDLHGDTTFSLTQSKIMIPRETMASGTAKDLFLFLARQIESFLRIHHNDHFEAHLRRRNEKNGNCEEDLFDLGFTFSFPVRQLGINKGTLIRWTKGFNIPDAVGKDVCALLQNAIDDLGLPVRVAALVNDTVGTLMARSYTSPGETGTFLGAIFGTGTNGAYVEKLDRITKLQTIEHSEYDKTTGEMIINAEWGSFDNHLSVLPNTIYDQQLDADSNNPGIQMFEKRVSGMFLGEILRRVMLDMQRNESLGFLRAGGASTVSVPQESSLYRQWGIDTSLLSLVEADKTENMEQIKVALKDHLKIERPTTDDCKAIQTVVHAIGKRAARLSAVPLAAILLSTGKLQKDDLVDIGVDGSLVEFYPNFEGYMRDALREVPEVGEAGNKKIRIGISKDGSGVGAALIALVASKEETRRKSQ.

The Hexokinase domain maps to 3–483 (SALLDEAARI…SGVGAALIAL (481 aa)). A hexokinase small subdomain region spans residues 57–206 (NGTEKGLYLA…GLPVRVAALV (150 aa)). An ATP-binding site is contributed by lysine 93. Residues 149-175 (DLGFTFSFPVRQLGINKGTLIRWTKGF) form a glucose-binding region. Residues 207-472 (NDTVGTLMAR…KKIRIGISKD (266 aa)) form a hexokinase large subdomain region. 472-477 (DGSGVG) is a binding site for ATP.

It belongs to the hexokinase family. In terms of assembly, monomer.

The enzyme catalyses D-glucose + ATP = D-glucose 6-phosphate + ADP + H(+). It catalyses the reaction a D-hexose + ATP = a D-hexose 6-phosphate + ADP + H(+). The catalysed reaction is D-mannose + ATP = D-mannose 6-phosphate + ADP + H(+). It carries out the reaction D-glucosamine + ATP = D-glucosamine 6-phosphate + ADP + H(+). The protein operates within carbohydrate metabolism; hexose metabolism. It functions in the pathway carbohydrate degradation; glycolysis; D-glyceraldehyde 3-phosphate and glycerone phosphate from D-glucose: step 1/4. The enzyme has great affinity for glucose. Mannose, 2-deoxyglucose and glucosamine can serve as substrates. The polypeptide is Glucokinase (glkA) (Aspergillus niger).